We begin with the raw amino-acid sequence, 396 residues long: Probable sugar efflux transporter (396 aa).

The next 12 membrane-spanning stretches (helical) occupy residues 15–35, 50–70, 81–101, 103–123, 136–156, 169–189, 209–229, 246–266, 275–295, 301–321, 333–353, and 364–384; these read VVTLAIAAFIFNTTEFVPVGL, VGIMLTIYAWVVAVMSLPFML, LICLFVLFIASHVLSFLAWNF, VLVISRIGIAFAHAIFWSITA, AQALSLIATGTALAMVLGLPI, TFFAIGMGALITLLCLIKLLP, PALMSLYVLTVVVVTAHYTAY, FATVLLLILGGAGIIGSLVFG, SLVSIAIALLVICLLLLLPAA, LAILSIFWGIAIMVIGLGMQV, VAMALFSGIFNIGIGAGALVG, and AIGYIGAIPACAALVWAVLIF.

This sequence belongs to the major facilitator superfamily. SotB (TC 2.A.1.2) family.

The protein localises to the cell inner membrane. Functionally, involved in the efflux of sugars. The physiological role may be the reduction of the intracellular concentration of toxic sugars or sugar metabolites. This chain is Probable sugar efflux transporter, found in Salmonella schwarzengrund (strain CVM19633).